The sequence spans 221 residues: 3-phospho-D-glycerate guanylyltransferase (221 aa).

This sequence belongs to the CofC family.

It carries out the reaction (2R)-3-phosphoglycerate + GTP + H(+) = 3-[(R)-glyceryl]-diphospho-5'-guanosine + diphosphate. It catalyses the reaction (2S)-2-phospholactate + GTP + H(+) = (2S)-lactyl-2-diphospho-5'-guanosine + diphosphate. It functions in the pathway cofactor biosynthesis; coenzyme F420 biosynthesis. Its function is as follows. Guanylyltransferase that catalyzes the activation of (2R)-3-phosphoglycerate (3PG) as 3-[(R)-glyceryl]-diphospho-5'-guanosine, via the condensation of 3PG with GTP. It is involved in the biosynthesis of a derivative of the hydride carrier cofactor coenzyme F420, 3PG-F420. Can also use (2S)-2-phospholactate (2-PL), with lower turnover, and has weak activity with phosphoenolpyruvate (PEP). The sequence is that of 3-phospho-D-glycerate guanylyltransferase from Mycetohabitans rhizoxinica (strain DSM 19002 / CIP 109453 / HKI 454) (Paraburkholderia rhizoxinica).